Reading from the N-terminus, the 150-residue chain is Deoxyuridine 5'-triphosphate nucleotidohydrolase (150 aa).

Residues 69 to 71 (RSG), Asn82, 86 to 88 (LID), and Lys96 contribute to the substrate site.

This sequence belongs to the dUTPase family. Requires Mg(2+) as cofactor.

It catalyses the reaction dUTP + H2O = dUMP + diphosphate + H(+). It participates in pyrimidine metabolism; dUMP biosynthesis; dUMP from dCTP (dUTP route): step 2/2. In terms of biological role, this enzyme is involved in nucleotide metabolism: it produces dUMP, the immediate precursor of thymidine nucleotides and it decreases the intracellular concentration of dUTP so that uracil cannot be incorporated into DNA. The polypeptide is Deoxyuridine 5'-triphosphate nucleotidohydrolase (Neisseria meningitidis serogroup B (strain ATCC BAA-335 / MC58)).